We begin with the raw amino-acid sequence, 83 residues long: Exodeoxyribonuclease 7 small subunit (83 aa).

The protein belongs to the XseB family. Heterooligomer composed of large and small subunits.

It localises to the cytoplasm. The catalysed reaction is Exonucleolytic cleavage in either 5'- to 3'- or 3'- to 5'-direction to yield nucleoside 5'-phosphates.. Its function is as follows. Bidirectionally degrades single-stranded DNA into large acid-insoluble oligonucleotides, which are then degraded further into small acid-soluble oligonucleotides. The chain is Exodeoxyribonuclease 7 small subunit from Moorella thermoacetica (strain ATCC 39073 / JCM 9320).